Consider the following 253-residue polypeptide: uncharacterized protein (253 aa).

Residues 175–184 (NPTQTSPGKP) are compositionally biased toward polar residues. Residues 175–253 (NPTQTSPGKP…ATENEDRLPS (79 aa)) form a disordered region. S180 is modified (phosphoserine). 2 stretches are compositionally biased toward low complexity: residues 185 to 196 (STSESSQTDTST) and 203 to 214 (TPTTTRASSYTT). Over residues 215 to 242 (LVSTSNQVSNEAEASAVETSANQAQNTE) the composition is skewed to polar residues.

Belongs to the TRAPP small subunits family. BET3 subfamily.

This is an uncharacterized protein from Schizosaccharomyces pombe (strain 972 / ATCC 24843) (Fission yeast).